Consider the following 240-residue polypeptide: Uridylate kinase (240 aa).

13 to 16 contributes to the ATP binding site; sequence KLSG. An involved in allosteric activation by GTP region spans residues 21-26; that stretch reads GEKGFG. Gly-55 contributes to the UMP binding site. Residues Gly-56 and Arg-60 each contribute to the ATP site. UMP contacts are provided by residues Asp-75 and 136–143; that span reads IGNPYFST. Asn-164, Tyr-170, and Asp-173 together coordinate ATP.

The protein belongs to the UMP kinase family. As to quaternary structure, homohexamer.

The protein localises to the cytoplasm. The catalysed reaction is UMP + ATP = UDP + ADP. It participates in pyrimidine metabolism; CTP biosynthesis via de novo pathway; UDP from UMP (UMPK route): step 1/1. Its activity is regulated as follows. Allosterically activated by GTP. Inhibited by UTP. Functionally, catalyzes the reversible phosphorylation of UMP to UDP. The polypeptide is Uridylate kinase (Staphylococcus aureus (strain Newman)).